The chain runs to 227 residues: Protein FAM3C (227 aa).

Residues 1–24 (MRVAGAAKLVVAVAVFLLTFYVIS) form the signal peptide. 2 disulfide bridges follow: Cys-58/Cys-86 and Cys-64/Cys-221. Residues 67–225 (KHFAFKMASG…VEMEGCIPQK (159 aa)) form the GG-type lectin domain.

This sequence belongs to the FAM3 family. In terms of tissue distribution, present in most secretory epithelia (at protein level).

It is found in the secreted. It localises to the cytoplasmic vesicle. May be involved in retinal laminar formation. Promotes epithelial to mesenchymal transition. In Homo sapiens (Human), this protein is Protein FAM3C (FAM3C).